The sequence spans 209 residues: Peroxynitrite isomerase 2 (209 aa).

Residues 56-62 (GVWRGEG) carry the GXWXGXG motif. Heme b-binding residues include Lys172 and His199.

It belongs to the nitrobindin family. Homodimer. The cofactor is heme b.

It catalyses the reaction peroxynitrite = nitrate. The protein operates within nitrogen metabolism. Its function is as follows. Heme-binding protein able to scavenge peroxynitrite and to protect free L-tyrosine against peroxynitrite-mediated nitration, by acting as a peroxynitrite isomerase that converts peroxynitrite to nitrate. Therefore, this protein likely plays a role in peroxynitrite sensing and in the detoxification of reactive nitrogen and oxygen species (RNS and ROS, respectively). Is able to bind nitric oxide (NO) in vitro, but may act as a sensor of peroxynitrite levels in vivo. The chain is Peroxynitrite isomerase 2 from Mycolicibacterium vanbaalenii (strain DSM 7251 / JCM 13017 / BCRC 16820 / KCTC 9966 / NRRL B-24157 / PYR-1) (Mycobacterium vanbaalenii).